Here is a 415-residue protein sequence, read N- to C-terminus: Glutamyl-tRNA reductase (415 aa).

Substrate is bound by residues 49–52 (TCNR), Ser106, 111–113 (EPQ), and Gln117. Cys50 acts as the Nucleophile in catalysis. Residue 186–191 (GAGETI) participates in NADP(+) binding.

The protein belongs to the glutamyl-tRNA reductase family. As to quaternary structure, homodimer.

It catalyses the reaction (S)-4-amino-5-oxopentanoate + tRNA(Glu) + NADP(+) = L-glutamyl-tRNA(Glu) + NADPH + H(+). It functions in the pathway porphyrin-containing compound metabolism; protoporphyrin-IX biosynthesis; 5-aminolevulinate from L-glutamyl-tRNA(Glu): step 1/2. Its function is as follows. Catalyzes the NADPH-dependent reduction of glutamyl-tRNA(Glu) to glutamate 1-semialdehyde (GSA). This Teredinibacter turnerae (strain ATCC 39867 / T7901) protein is Glutamyl-tRNA reductase.